The primary structure comprises 918 residues: Alpha-scruin (918 aa).

6 Kelch repeats span residues 82–133 (VVLA…YFHR), 134–187 (RVYV…VMDE), 188–235 (RIFV…NNEG), 237–289 (IYVI…TQNK), 291–341 (IWIW…KTGA), and 342–390 (HVFI…AIPA). Residues 398–427 (EVPTSTPSSKAKPQPGSKPTSVKYKKQPDI) form a disordered region. Residues 430-459 (RNEAAKKVQRRWRRYIEQKSITKRMQQGDS) form the IQ domain. Kelch repeat units lie at residues 590–641 (VIIG…YYRS), 642–695 (AIYI…VFND), 696–743 (VLYA…AHGG), 745–795 (IWLL…VCDN), 797–849 (IWLC…ALES), and 851–898 (LYIA…TIPP).

As to expression, sperm.

In terms of biological role, actin bundling protein found in the acrosomal sperm process. This Limulus polyphemus (Atlantic horseshoe crab) protein is Alpha-scruin.